The primary structure comprises 286 residues: Putative cyclin-H (286 aa).

Residues 79–148 (AIIYIKRFYL…ILESLNFNLI (70 aa)) form the Cyclin N-terminal domain. Residues 235–286 (NNNNNNNNNNNNNNNNNNNNNNNNNNNNNNNNNNNNNNNNNNNNNNNNNLLL) are disordered.

It belongs to the cyclin family. Cyclin C subfamily.

The protein resides in the nucleus. Functionally, may regulate cdk7 involved in transcription regulation and cell cycle progression. The protein is Putative cyclin-H (cycH) of Dictyostelium discoideum (Social amoeba).